Consider the following 83-residue polypeptide: Small ribosomal subunit protein eS21 (83 aa).

This sequence belongs to the eukaryotic ribosomal protein eS21 family. As to quaternary structure, component of the 40S small ribosomal subunit. Interacts with sta.

It localises to the cytoplasm. Its subcellular location is the cytosol. The protein localises to the rough endoplasmic reticulum. May be an associated component of the ribosome rather than a core structural subunit. May act as a translation initiation factor. Has a role in regulation of cell proliferation in the hematopoietic organs and the imaginal disks of larva. The polypeptide is Small ribosomal subunit protein eS21 (RpS21) (Drosophila ananassae (Fruit fly)).